The primary structure comprises 557 residues: Suprabasin (557 aa).

The first 23 residues, 1-23 (MHLASLLSSCSLLLLLGALPGWA), serve as a signal peptide directing secretion. 4 disordered regions span residues 150–175 (RFGQ…GAHH), 422–441 (GQGA…KVAQ), 464–490 (AAGQ…GKQE), and 509–533 (NQLL…TTLT). Positions 153 to 175 (QGAHHATGQAGKEAEKFGQGAHH) are enriched in low complexity. Over residues 476–487 (GQGVHHAAGQAG) the composition is skewed to low complexity.

It is found in the secreted. The protein is Suprabasin (SBSN) of Bos taurus (Bovine).